We begin with the raw amino-acid sequence, 513 residues long: Cobyric acid synthase (513 aa).

The GATase cobBQ-type domain occupies 252-457; the sequence is KIDIAVIRLP…LHGIFDEEGI (206 aa). Cys-333 functions as the Nucleophile in the catalytic mechanism. The active site involves His-449.

Belongs to the CobB/CobQ family. CobQ subfamily.

The protein operates within cofactor biosynthesis; adenosylcobalamin biosynthesis. Catalyzes amidations at positions B, D, E, and G on adenosylcobyrinic A,C-diamide. NH(2) groups are provided by glutamine, and one molecule of ATP is hydrogenolyzed for each amidation. The sequence is that of Cobyric acid synthase from Lachnoclostridium phytofermentans (strain ATCC 700394 / DSM 18823 / ISDg) (Clostridium phytofermentans).